The following is a 72-amino-acid chain: Translation initiation factor IF-1 (72 aa).

The 72-residue stretch at 1-72 folds into the S1-like domain; it reads MAKTDLLEVQ…ERGRIVFRHK (72 aa).

The protein belongs to the IF-1 family. Component of the 30S ribosomal translation pre-initiation complex which assembles on the 30S ribosome in the order IF-2 and IF-3, IF-1 and N-formylmethionyl-tRNA(fMet); mRNA recruitment can occur at any time during PIC assembly.

Its subcellular location is the cytoplasm. In terms of biological role, one of the essential components for the initiation of protein synthesis. Stabilizes the binding of IF-2 and IF-3 on the 30S subunit to which N-formylmethionyl-tRNA(fMet) subsequently binds. Helps modulate mRNA selection, yielding the 30S pre-initiation complex (PIC). Upon addition of the 50S ribosomal subunit IF-1, IF-2 and IF-3 are released leaving the mature 70S translation initiation complex. In Spiroplasma kunkelii, this protein is Translation initiation factor IF-1.